A 100-amino-acid chain; its full sequence is Small ribosomal subunit protein uS14c (100 aa).

The protein belongs to the universal ribosomal protein uS14 family. Part of the 30S ribosomal subunit.

The protein localises to the plastid. It localises to the chloroplast. Functionally, binds 16S rRNA, required for the assembly of 30S particles. The polypeptide is Small ribosomal subunit protein uS14c (Aethionema grandiflorum (Persian stone-cress)).